The following is a 122-amino-acid chain: UPF0102 protein Rleg2_4331 (122 aa).

This sequence belongs to the UPF0102 family.

In Rhizobium leguminosarum bv. trifolii (strain WSM2304), this protein is UPF0102 protein Rleg2_4331.